A 424-amino-acid chain; its full sequence is Endoglucanase (424 aa).

A signal peptide spans Met1 to Gly19. Cys20 carries N-palmitoyl cysteine lipidation. Cys20 carries the S-diacylglycerol cysteine lipid modification. Residues Cys20–Ala43 constitute a propeptide that is removed on maturation. Glu247 functions as the Proton donor in the catalytic mechanism. The Nucleophile role is filled by Glu359.

Belongs to the glycosyl hydrolase 5 (cellulase A) family.

It is found in the cell membrane. The catalysed reaction is Endohydrolysis of (1-&gt;4)-beta-D-glucosidic linkages in cellulose, lichenin and cereal beta-D-glucans.. This chain is Endoglucanase (egl), found in Ralstonia nicotianae (strain ATCC BAA-1114 / GMI1000) (Ralstonia solanacearum).